The chain runs to 943 residues: Lysine-specific demethylase JMJ21 (943 aa).

Residues 14–60 (LGSLSVLPDETICVLLEYLAPRDIAHLACVSSVMYILCNEEPLWMSL) form the F-box domain. Positions 216-379 (EAAPELLKDY…FVCLDMAPGY (164 aa)) constitute a JmjC domain. Fe cation is bound by residues His-262, Asp-264, and His-347. Positions 396–410 (NSEDLEEETHDEEDN) are enriched in acidic residues. A disordered region spans residues 396-438 (NSEDLEEETHDEEDNTLSYSDLTRKEKRTRMNGGGETENREED).

It belongs to the JARID1 histone demethylase family. Fe(2+) is required as a cofactor. In terms of tissue distribution, mostly expressed in leaves, and, to a lower extent, in inflorescences, roots, siliques and stems.

Its subcellular location is the nucleus. Its function is as follows. May function as histone H3 lysine demethylase and be involved in regulation of gene expression. The chain is Lysine-specific demethylase JMJ21 from Arabidopsis thaliana (Mouse-ear cress).